Here is a 417-residue protein sequence, read N- to C-terminus: Serine hydroxymethyltransferase (417 aa).

(6S)-5,6,7,8-tetrahydrofolate contacts are provided by residues L121 and 125–127; that span reads GHL. K229 bears the N6-(pyridoxal phosphate)lysine mark. 355–357 lines the (6S)-5,6,7,8-tetrahydrofolate pocket; the sequence is SPF.

The protein belongs to the SHMT family. In terms of assembly, homodimer. Pyridoxal 5'-phosphate serves as cofactor.

Its subcellular location is the cytoplasm. The catalysed reaction is (6R)-5,10-methylene-5,6,7,8-tetrahydrofolate + glycine + H2O = (6S)-5,6,7,8-tetrahydrofolate + L-serine. The protein operates within one-carbon metabolism; tetrahydrofolate interconversion. It participates in amino-acid biosynthesis; glycine biosynthesis; glycine from L-serine: step 1/1. Catalyzes the reversible interconversion of serine and glycine with tetrahydrofolate (THF) serving as the one-carbon carrier. This reaction serves as the major source of one-carbon groups required for the biosynthesis of purines, thymidylate, methionine, and other important biomolecules. Also exhibits THF-independent aldolase activity toward beta-hydroxyamino acids, producing glycine and aldehydes, via a retro-aldol mechanism. This is Serine hydroxymethyltransferase from Salmonella paratyphi C (strain RKS4594).